The following is a 315-amino-acid chain: Small ribosomal subunit protein uS2 (315 aa).

The tract at residues 250–315 (LLEQGDAAKA…TESEKAPVSE (66 aa)) is disordered. Composition is skewed to basic and acidic residues over residues 272–282 (VSAKNEAKSED) and 297–315 (TEAK…PVSE).

It belongs to the universal ribosomal protein uS2 family.

The protein is Small ribosomal subunit protein uS2 of Clavibacter michiganensis subsp. michiganensis (strain NCPPB 382).